The primary structure comprises 473 residues: H(+)/Cl(-) exchange transporter ClcA (473 aa).

Over 1–32 (MKTDTPSLETPQAARLRRRQLIRQLLERDKTP) the chain is Cytoplasmic. Residues 33 to 69 (LAILFMAAVVGTLVGLAAVAFDKGVAWLQNQRMGALV) form a helical membrane-spanning segment. Residues 70 to 76 (HTADNYP) lie on the Periplasmic side of the membrane. A helical transmembrane segment spans residues 77–100 (LLLTVAFLCSAVLAMFGYFLVRKY). Residues 106-110 (GSGIP) carry the Selectivity filter part_1 motif. S107 serves as a coordination point for chloride. The helical intramembrane region spans 109 to 116 (IPEIEGAL). The Cytoplasmic segment spans residues 117 to 123 (EDQRPVR). Helical transmembrane passes span 124–141 (WWRVLPVKFFGGLGTLGG) and 148–166 (EGPTVQIGGNIGRMVLDIF). The short motif at 146–150 (GREGP) is the Selectivity filter part_2 element. Over 167–176 (RLKGDEARHT) the chain is Cytoplasmic. Intramembrane regions (helical) lie at residues 177 to 189 (LLATGAAAGLAAA) and 193 to 201 (PLAGILFII). The Cytoplasmic portion of the chain corresponds to 202–214 (EEMRPQFRYTLIS). The helical transmembrane segment at 215-232 (IKAVFIGVIMSTIMYRIF) threads the bilayer. Over 233 to 252 (NHEVALIDVGKLSDAPLNTQ) the chain is Periplasmic. Residues 253 to 281 (WLYLILGIIFGIFGPIFNKWVLGMQDLLH) traverse the membrane as a helical segment. Topologically, residues 282–287 (RVHGGN) are cytoplasmic. Residues 288 to 309 (ITKWVLMGGAIGGLCGLLGFVA) form a helical membrane-spanning segment. Over 310–329 (PATSGGGFNLIPIATAGNFS) the chain is Periplasmic. Transmembrane regions (helical) follow at residues 330 to 349 (MGMLVFIFVARVITTLLCFS) and 355 to 376 (GIFAPMLALGTVLGTAFGMVVV). The Selectivity filter part_3 motif lies at 355-359 (GIFAP). I356 and F357 together coordinate chloride. Over 377 to 386 (ELFPQYHLEA) the chain is Periplasmic. Positions 387-401 (GTFAIAGMGALLAAS) form an intramembrane region, helical. The segment at residues 402–404 (IRA) is an intramembrane region (note=Loop between two helices). The segment at residues 405–416 (PLTGIILVLEMT) is an intramembrane region (helical). The segment at residues 417–421 (DNYQL) is an intramembrane region (note=Loop between two helices). A helical transmembrane segment spans residues 422-438 (ILPMIITGLGATLLAQF). The Cytoplasmic segment spans residues 439 to 473 (TGGKPLYSAILARTLAKQEAEQLARSKAASASENT). Chloride is bound at residue Y445.

This sequence belongs to the chloride channel (TC 2.A.49) family. ClcA subfamily. As to quaternary structure, homodimer.

The protein localises to the cell inner membrane. The enzyme catalyses 2 chloride(in) + H(+)(out) = 2 chloride(out) + H(+)(in). Functionally, proton-coupled chloride transporter. Functions as antiport system and exchanges two chloride ions for 1 proton. Probably acts as an electrical shunt for an outwardly-directed proton pump that is linked to amino acid decarboxylation, as part of the extreme acid resistance (XAR) response. This chain is H(+)/Cl(-) exchange transporter ClcA, found in Shigella boydii serotype 18 (strain CDC 3083-94 / BS512).